The chain runs to 134 residues: Small ribosomal subunit protein uS11 (134 aa).

The interval Met1–Thr22 is disordered. The segment covering Ala9–Asn18 has biased composition (basic residues).

The protein belongs to the universal ribosomal protein uS11 family. Part of the 30S ribosomal subunit. Interacts with proteins S7 and S18. Binds to IF-3.

Its function is as follows. Located on the platform of the 30S subunit, it bridges several disparate RNA helices of the 16S rRNA. Forms part of the Shine-Dalgarno cleft in the 70S ribosome. The protein is Small ribosomal subunit protein uS11 of Kocuria rhizophila (strain ATCC 9341 / DSM 348 / NBRC 103217 / DC2201).